Here is a 74-residue protein sequence, read N- to C-terminus: Putative ribosome-binding protein YbzG (74 aa).

This Bacillus subtilis (strain 168) protein is Putative ribosome-binding protein YbzG (ybzG).